A 161-amino-acid chain; its full sequence is Small ribosomal subunit protein uS19 (161 aa).

Residues 1 to 19 show a composition bias toward basic residues; that stretch reads MARQKKYSGKGGARKKNKQ. Residues 1–26 are disordered; it reads MARQKKYSGKGGARKKNKQKQSVAPR.

The protein belongs to the universal ribosomal protein uS19 family.

Functionally, protein S19 forms a complex with S13 that binds strongly to the 16S ribosomal RNA. The sequence is that of Small ribosomal subunit protein uS19 from Methanococcus maripaludis (strain C6 / ATCC BAA-1332).